A 301-amino-acid chain; its full sequence is ATP synthase gamma chain (301 aa).

The protein belongs to the ATPase gamma chain family. F-type ATPases have 2 components, CF(1) - the catalytic core - and CF(0) - the membrane proton channel. CF(1) has five subunits: alpha(3), beta(3), gamma(1), delta(1), epsilon(1). CF(0) has three main subunits: a, b and c.

It localises to the cell inner membrane. Produces ATP from ADP in the presence of a proton gradient across the membrane. The gamma chain is believed to be important in regulating ATPase activity and the flow of protons through the CF(0) complex. The polypeptide is ATP synthase gamma chain (Helicobacter pylori (strain HPAG1)).